An 898-amino-acid polypeptide reads, in one-letter code: Chloride channel protein 2 (898 aa).

The Cytoplasmic segment spans residues Met1–Val90. Positions Gln19 to Ala37 are essential for channel gating by both voltage and cell volume. At Thr23 the chain carries Phosphothreonine. A modulates channel gating by both voltage and cell volume region spans residues Glu39–Trp52. 2 consecutive transmembrane segments (helical) span residues Gly91–Trp124 and Leu133–Leu158. The short motif at Gly164–Pro168 is the Selectivity filter part_1 element. An intramembrane region (helical) is located at residues Ile167 to Leu174. A run of 2 helical transmembrane segments spans residues Leu183–Ser201 and Glu208–Leu226. The Selectivity filter part_2 signature appears at Gly206–Pro210. Intramembrane regions (helical) lie at residues Met242–Cys254 and Pro258–Ile266. Helical transmembrane passes span Tyr278 to Trp298, Leu324 to Met352, Phe361 to Leu380, Ala432 to Ala452, and Gly460 to Trp483. Residues Gly460–Pro464 carry the Selectivity filter part_3 motif. Residues Gly500 to Val514 constitute an intramembrane region (helical). An intramembrane region (note=Loop between two helices) is located at residues Thr515–His516. The helical intramembrane region spans Thr517 to Thr528. The note=Loop between two helices intramembrane region spans Gly529 to His533. Residues Ile534–Leu551 form a helical membrane-spanning segment. Over Gln552–Gln898 the chain is Cytoplasmic. In terms of domain architecture, CBS 1 spans Met587–Pro645. A compositionally biased stretch (basic residues) spans Arg647–Ala658. The interval Arg647–Ser675 is disordered. Ser710 is modified (phosphoserine). A disordered region spans residues Phe726 to Met766. Positions Glu737–Lys746 are enriched in basic and acidic residues. Ser758 carries the phosphoserine modification. Positions Ile790 to Val850 constitute a CBS 2 domain. Positions Leu812 to Leu813 match the Basolateral membrane sorting motif. Residues Ser856–Gln898 are disordered.

The protein belongs to the chloride channel (TC 2.A.49) family. ClC-2/CLCN2 subfamily. In terms of assembly, homodimer. Interacts with auxiliary subunit HEPACAM. Post-translationally, phosphorylated. Activated by dephosphorylation. Ubiquitously expressed.

The protein localises to the cell membrane. It is found in the basolateral cell membrane. It localises to the cell projection. The protein resides in the dendritic spine membrane. Its subcellular location is the axon. It catalyses the reaction chloride(in) = chloride(out). The enzyme catalyses thiocyanate(in) = thiocyanate(out). It carries out the reaction bromide(in) = bromide(out). The catalysed reaction is nitrate(in) = nitrate(out). It catalyses the reaction iodide(out) = iodide(in). Common gate kinetics are down-regulated by intracellular ATP. Inhibited by AK-42, a derivative of meclofenamate. Inhibited by Cd(2+). Inhibited by Zn(2+) and PKC activation. Inhibited at acidic pH. CCLN2:HEPACAM channel conductance is up-regulated upon hypo-osmolarity. Voltage-gated and osmosensitive chloride channel. Forms a homodimeric channel where each subunit has its own ion conduction pathway. Conducts double-barreled currents controlled by two types of gates, two fast glutamate gates that control each subunit independently and a slow common gate that opens and shuts off both subunits simultaneously. Displays inward rectification currents activated upon membrane hyperpolarization and extracellular hypotonicity. Contributes to chloride conductance involved in neuron excitability. In hippocampal neurons, generates a significant part of resting membrane conductance and provides an additional chloride efflux pathway to prevent chloride accumulation in dendrites upon GABA receptor activation. In glia, associates with the auxiliary subunit HEPACAM/GlialCAM at astrocytic processes and myelinated fiber tracts where it may regulate transcellular chloride flux buffering extracellular chloride and potassium concentrations. Regulates aldosterone production in adrenal glands. The opening of CLCN2 channels at hyperpolarized membrane potentials in the glomerulosa causes cell membrane depolarization, activation of voltage-gated calcium channels and increased expression of aldosterone synthase, the rate-limiting enzyme for aldosterone biosynthesis. Contributes to chloride conductance in retinal pigment epithelium involved in phagocytosis of shed photoreceptor outer segments and photoreceptor renewal. Conducts chloride currents at the basolateral membrane of epithelial cells with a role in chloride reabsorption rather than secretion. Permeable to small monovalent anions with chloride &gt; thiocyanate &gt; bromide &gt; nitrate &gt; iodide ion selectivity. This is Chloride channel protein 2 (CLCN2) from Oryctolagus cuniculus (Rabbit).